The primary structure comprises 219 residues: DnaJ homolog subfamily C member 30, mitochondrial (219 aa).

A mitochondrion-targeting transit peptide spans 1–38 (MAAARCLGWTLSPLWRWWQVRGLPPSSATGLCSRGRTY). The 66-residue stretch at 42-107 (ALYELLGVPS…ILRRKYDRGL (66 aa)) folds into the J domain. A disordered region spans residues 109-148 (SDQDLRGPGVKPSKTPVADPAPPRPPPYTPRAPGGSRASP). Residues 127–138 (DPAPPRPPPYTP) are compositionally biased toward pro residues. The chain crosses the membrane as a helical span at residues 202–218 (ATFFVVLFLIFVFVGFR).

As to quaternary structure, associates with the ATP synthase complex. Interacts with MT-ATP6; interaction is direct. Interacts with ATP5MC2; interaction is direct. As to expression, in brain, expressed in gray matter structures.

Its subcellular location is the mitochondrion inner membrane. Functionally, mitochondrial protein enriched in neurons that acts as a regulator of mitochondrial respiration. Associates with the ATP synthase complex and facilitates ATP synthesis. May be a chaperone protein involved in the turnover of the subunits of mitochondrial complex I N-module. It facilitates the degradation of N-module subunits damaged by oxidative stress, and contributes to complex I functional efficiency. The chain is DnaJ homolog subfamily C member 30, mitochondrial from Mus musculus (Mouse).